Here is a 251-residue protein sequence, read N- to C-terminus: Hydroxyacylglutathione hydrolase (251 aa).

The Zn(2+) site is built by His-53, His-55, Asp-57, His-58, His-110, Asp-127, and His-165.

Belongs to the metallo-beta-lactamase superfamily. Glyoxalase II family. Monomer. Zn(2+) serves as cofactor.

The enzyme catalyses an S-(2-hydroxyacyl)glutathione + H2O = a 2-hydroxy carboxylate + glutathione + H(+). The protein operates within secondary metabolite metabolism; methylglyoxal degradation; (R)-lactate from methylglyoxal: step 2/2. Its function is as follows. Thiolesterase that catalyzes the hydrolysis of S-D-lactoyl-glutathione to form glutathione and D-lactic acid. This chain is Hydroxyacylglutathione hydrolase, found in Enterobacter sp. (strain 638).